Reading from the N-terminus, the 227-residue chain is Peroxisomal membrane protein 11B (227 aa).

At 1–85 the chain is on the cytoplasmic side; sequence MSLDTVDKLV…RNPGATPMIR (85 aa). Residues 86–106 traverse the membrane as a helical segment; that stretch reads FLAVLANSGEMVYFFFDHFLW. Residues 107 to 201 lie on the Lumenal side of the membrane; it reads LSRIGSIDAK…IALAEIHPNP (95 aa). Residues 202 to 222 form a helical membrane-spanning segment; sequence FCNHTITLGISGLVSAWAGWY. Residues 223 to 227 lie on the Cytoplasmic side of the membrane; that stretch reads RNWPS.

The protein belongs to the peroxin-11 family. As to quaternary structure, homooligomer. Interacts with ARC5 and FIS1B on peroxisomes. Expressed in roots, leaves and developing siliques.

The protein localises to the peroxisome membrane. In terms of biological role, involved in peroxisomal proliferation. Promotes peroxisomal duplication, aggregation or elongation without fission. The chain is Peroxisomal membrane protein 11B (PEX11B) from Arabidopsis thaliana (Mouse-ear cress).